An 803-amino-acid polypeptide reads, in one-letter code: Translation initiation factor IF-2 (803 aa).

Disordered regions lie at residues 95–125 (PVVE…EKAE) and 138–209 (EVKE…KLEQ). Positions 111–121 (VPLTSDTTNLN) are enriched in polar residues. Basic and acidic residues predominate over residues 138-155 (EVKEEAKKTPSEKKETPK). Basic residues predominate over residues 156–167 (KGPRKETRRSRK). The segment covering 168 to 188 (PDKEDKWEREELHMTKLVEER) has biased composition (basic and acidic residues). A tr-type G domain is found at 302–471 (PRAPVVTIMG…LLQAEVLELK (170 aa)). Residues 311–318 (GHVDHGKT) form a G1 region. Position 311-318 (311-318 (GHVDHGKT)) interacts with GTP. A G2 region spans residues 336-340 (GITQH). The segment at 357-360 (DTPG) is G3. GTP-binding positions include 357 to 361 (DTPGH) and 411 to 414 (NKID). The interval 411 to 414 (NKID) is G4. Positions 447–449 (SAK) are G5.

It belongs to the TRAFAC class translation factor GTPase superfamily. Classic translation factor GTPase family. IF-2 subfamily.

It localises to the cytoplasm. One of the essential components for the initiation of protein synthesis. Protects formylmethionyl-tRNA from spontaneous hydrolysis and promotes its binding to the 30S ribosomal subunits. Also involved in the hydrolysis of GTP during the formation of the 70S ribosomal complex. This chain is Translation initiation factor IF-2, found in Coxiella burnetii (strain CbuG_Q212) (Coxiella burnetii (strain Q212)).